A 337-amino-acid polypeptide reads, in one-letter code: Heat-inducible transcription repressor HrcA (337 aa).

The protein belongs to the HrcA family.

Functionally, negative regulator of class I heat shock genes (grpE-dnaK-dnaJ and groELS operons). Prevents heat-shock induction of these operons. The sequence is that of Heat-inducible transcription repressor HrcA from Nocardioides sp. (strain ATCC BAA-499 / JS614).